The following is a 108-amino-acid chain: Phosphoribosyl-ATP pyrophosphatase (108 aa).

This sequence belongs to the PRA-PH family.

The protein resides in the cytoplasm. It carries out the reaction 1-(5-phospho-beta-D-ribosyl)-ATP + H2O = 1-(5-phospho-beta-D-ribosyl)-5'-AMP + diphosphate + H(+). It functions in the pathway amino-acid biosynthesis; L-histidine biosynthesis; L-histidine from 5-phospho-alpha-D-ribose 1-diphosphate: step 2/9. The sequence is that of Phosphoribosyl-ATP pyrophosphatase from Dechloromonas aromatica (strain RCB).